Here is a 614-residue protein sequence, read N- to C-terminus: Protein YehQ (614 aa).

SWIM-type zinc fingers lie at residues 55-89 (VRTQ…LSYQ) and 151-185 (SDVR…QAFV).

In Escherichia coli (strain K12), this protein is Protein YehQ (yehQ).